The chain runs to 275 residues: Large ribosomal subunit protein uL2c (275 aa).

The segment at 225–249 (PVDHPHGGGEGRAPIGRKKPTTPWG) is disordered.

It belongs to the universal ribosomal protein uL2 family. Part of the 50S ribosomal subunit.

It localises to the plastid. The sequence is that of Large ribosomal subunit protein uL2c (rpl2) from Cuscuta reflexa (Southern Asian dodder).